A 366-amino-acid chain; its full sequence is 3-isopropylmalate dehydrogenase (366 aa).

78 to 91 serves as a coordination point for NAD(+); sequence GPKWEDLPSHLQPE. Positions 99, 109, 138, and 227 each coordinate substrate. The Mg(2+) site is built by D227, D251, and D255. Position 285–297 (285–297) interacts with NAD(+); sequence GSAPDIKGKNIAN.

It belongs to the isocitrate and isopropylmalate dehydrogenases family. LeuB type 1 subfamily. As to quaternary structure, homodimer. It depends on Mg(2+) as a cofactor. The cofactor is Mn(2+).

It is found in the cytoplasm. The catalysed reaction is (2R,3S)-3-isopropylmalate + NAD(+) = 4-methyl-2-oxopentanoate + CO2 + NADH. Its pathway is amino-acid biosynthesis; L-leucine biosynthesis; L-leucine from 3-methyl-2-oxobutanoate: step 3/4. Catalyzes the oxidation of 3-carboxy-2-hydroxy-4-methylpentanoate (3-isopropylmalate) to 3-carboxy-4-methyl-2-oxopentanoate. The product decarboxylates to 4-methyl-2 oxopentanoate. This is 3-isopropylmalate dehydrogenase from Buchnera aphidicola subsp. Baizongia pistaciae (strain Bp).